The primary structure comprises 301 residues: UDP-N-acetylenolpyruvoylglucosamine reductase (301 aa).

An FAD-binding PCMH-type domain is found at 27-194 (RVGGPADVVF…LDAIFEGTPD (168 aa)). Residue arginine 172 is part of the active site. Serine 223 functions as the Proton donor in the catalytic mechanism. Glutamate 293 is a catalytic residue.

It belongs to the MurB family. It depends on FAD as a cofactor.

The protein localises to the cytoplasm. It carries out the reaction UDP-N-acetyl-alpha-D-muramate + NADP(+) = UDP-N-acetyl-3-O-(1-carboxyvinyl)-alpha-D-glucosamine + NADPH + H(+). It functions in the pathway cell wall biogenesis; peptidoglycan biosynthesis. Its function is as follows. Cell wall formation. The polypeptide is UDP-N-acetylenolpyruvoylglucosamine reductase (Caulobacter vibrioides (strain NA1000 / CB15N) (Caulobacter crescentus)).